The chain runs to 222 residues: Probable septum site-determining protein MinC (222 aa).

This sequence belongs to the MinC family. As to quaternary structure, interacts with MinD and FtsZ.

Functionally, cell division inhibitor that blocks the formation of polar Z ring septums. Rapidly oscillates between the poles of the cell to destabilize FtsZ filaments that have formed before they mature into polar Z rings. Prevents FtsZ polymerization. This chain is Probable septum site-determining protein MinC, found in Lysinibacillus sphaericus (strain C3-41).